The primary structure comprises 319 residues: Beta-sarcoglycan (319 aa).

Low complexity predominate over residues 1–10; sequence MAAAAAAAAA. Residues 1 to 33 form a disordered region; the sequence is MAAAAAAAAAEQQSSNGPVKKSMREKAVERRNV. Topologically, residues 1–66 are cytoplasmic; sequence MAAAAAAAAA…GLRGRKGNLA (66 aa). The segment covering 22 to 33 has biased composition (basic and acidic residues); the sequence is SMREKAVERRNV. A helical; Signal-anchor for type II membrane protein membrane pass occupies residues 67–87; it reads ICVIILLFILAVINLIITLVI. Topologically, residues 88 to 318 are extracellular; sequence WAVIRIGPNG…QISDNPCGNT (231 aa). N-linked (GlcNAc...) asparagine glycans are attached at residues N159, N212, and N259. 2 disulfide bridges follow: C289–C315 and C291–C308.

It belongs to the sarcoglycan beta/delta/gamma/zeta family. Cross-link to form 2 major subcomplexes: one consisting of SGCB, SGCD and SGCG and the other consisting of SGCB and SGCD. The association between SGCB and SGCG is particularly strong while SGCA is loosely associated with the other sarcoglycans. In terms of processing, disulfide bonds are present.

It is found in the cell membrane. It localises to the sarcolemma. The protein localises to the cytoplasm. Its subcellular location is the cytoskeleton. Its function is as follows. Component of the sarcoglycan complex, a subcomplex of the dystrophin-glycoprotein complex which forms a link between the F-actin cytoskeleton and the extracellular matrix. In Pongo abelii (Sumatran orangutan), this protein is Beta-sarcoglycan (SGCB).